A 242-amino-acid chain; its full sequence is Uridylate kinase (242 aa).

An ATP-binding site is contributed by 11 to 14 (KLSG). The interval 19 to 24 (GEKGAG) is involved in allosteric activation by GTP. Gly53 contributes to the UMP binding site. 2 residues coordinate ATP: Gly54 and Arg58. UMP contacts are provided by residues Asp73 and 134–141 (IGSPYFST). Positions 162, 168, and 171 each coordinate ATP.

It belongs to the UMP kinase family. Homohexamer.

It localises to the cytoplasm. It catalyses the reaction UMP + ATP = UDP + ADP. The protein operates within pyrimidine metabolism; CTP biosynthesis via de novo pathway; UDP from UMP (UMPK route): step 1/1. Its activity is regulated as follows. Allosterically activated by GTP. Inhibited by UTP. In terms of biological role, catalyzes the reversible phosphorylation of UMP to UDP. In Streptococcus pyogenes serotype M2 (strain MGAS10270), this protein is Uridylate kinase.